The primary structure comprises 494 residues: MELSLESLGGLHSVAHAQAGELLSPGHARSAAAQHRGLVAPGRPGLVAGMASLLDGGGGGGGGGAGGAGGAGSAGGGADFRGELAGPLHPAMGMACEAPGLGGTYTTLTPLQHLPPLAAVADKFHQHAAAAAVAGAHGGHPHAHPHPAAAPPPPPPPQRLAASVSGSFTLMRDERAALASVGHLYGPYGKELPAMGSPLSPLPNALPPALHGAPQPPPPPPPPPLAAYGPPGHLAGDKLLPPAAFEPHAALLGRAEDALARGLPGGGGGTGSGGAGSGSAAGLLAPLGGLAAAGAHGPHGGGGGPGGSGGGPSAGAAAEEINTKEVAQRITAELKRYSIPQAIFAQRILCRSQGTLSDLLRNPKPWSKLKSGRETFRRMWKWLQEPEFQRMSALRLAACKRKEQEQQKERALQPKKQRLVFTDLQRRTLIAIFKENKRPSKEMQVTISQQLGLELNTVSNFFMNARRRCMNRWAEEPSTAPGGPAGATATFSKA.

3 disordered regions span residues 130–162 (AAAV…RLAA), 199–239 (LSPL…GDKL), and 295–319 (AHGP…AAAE). 2 stretches are compositionally biased toward pro residues: residues 148–158 (AAAPPPPPPPQ) and 214–225 (PQPPPPPPPPPL). Residues 297 to 313 (GPHGGGGGPGGSGGGPS) show a composition bias toward gly residues. Positions 312-398 (PSAGAAAEEI…QRMSALRLAA (87 aa)) form a DNA-binding region, CUT. A DNA-binding region (homeobox) is located at residues 414 to 473 (PKKQRLVFTDLQRRTLIAIFKENKRPSKEMQVTISQQLGLELNTVSNFFMNARRRCMNRW). The disordered stretch occupies residues 475 to 494 (EEPSTAPGGPAGATATFSKA). The span at 476–494 (EPSTAPGGPAGATATFSKA) shows a compositional bias: low complexity.

It belongs to the CUT homeobox family.

It is found in the nucleus. Transcriptional activator. Binds the consensus DNA sequence 5'-DHWATTGAYTWWD-3' on a variety of gene promoters such as those of HNF3B and TTR. This is One cut domain family member 3 (ONECUT3) from Homo sapiens (Human).